A 474-amino-acid chain; its full sequence is Synaptotagmin 1 (474 aa).

2 disordered regions span residues methionine 1–glutamate 49 and glutamine 63–threonine 84. Over methionine 1–arginine 107 the chain is Vesicular. The segment covering valine 30–glutamate 49 has biased composition (basic and acidic residues). Residues glutamate 69–threonine 84 are compositionally biased toward low complexity. A helical membrane pass occupies residues threonine 108–valine 134. The Cytoplasmic segment spans residues arginine 135–lysine 474. The interval proline 170–serine 189 is disordered. The span at aspartate 171–lysine 187 shows a compositional bias: acidic residues. A phospholipid binding region spans residues aspartate 186 to methionine 434. C2 domains follow at residues lysine 192–arginine 312 and lysine 325–histidine 458. Residues leucine 222, aspartate 223, aspartate 229, aspartate 282, phenylalanine 283, aspartate 284, serine 287, lysine 288, aspartate 290, aspartate 356, aspartate 362, aspartate 416, and aspartate 418 each coordinate Ca(2+).

This sequence belongs to the synaptotagmin family. In terms of assembly, homodimer or homotrimer (Potential). Identified in a complex with Syn and nwk. Interacts with StnA and StnB via its second C2 domain. This interaction may mediate its retrieval from the plasma membrane, thereby facilitating the internalization of multiple synaptic vesicles from the plasma membrane. Ca(2+) serves as cofactor.

The protein resides in the cytoplasmic vesicle. The protein localises to the secretory vesicle. It is found in the synaptic vesicle membrane. Its subcellular location is the synapse. May have a regulatory role in the membrane interactions during trafficking of synaptic vesicles at the active zone of the synapse. It binds acidic phospholipids with a specificity that requires the presence of both an acidic head group and a diacyl backbone. This Drosophila melanogaster (Fruit fly) protein is Synaptotagmin 1 (Syt1).